The following is a 100-amino-acid chain: Large ribosomal subunit protein uL23 (100 aa).

The protein belongs to the universal ribosomal protein uL23 family. As to quaternary structure, part of the 50S ribosomal subunit. Contacts protein L29, and trigger factor when it is bound to the ribosome.

In terms of biological role, one of the early assembly proteins it binds 23S rRNA. One of the proteins that surrounds the polypeptide exit tunnel on the outside of the ribosome. Forms the main docking site for trigger factor binding to the ribosome. The protein is Large ribosomal subunit protein uL23 of Mycobacteroides abscessus (strain ATCC 19977 / DSM 44196 / CCUG 20993 / CIP 104536 / JCM 13569 / NCTC 13031 / TMC 1543 / L948) (Mycobacterium abscessus).